The sequence spans 441 residues: Plasmepsin VI (441 aa).

At 1–7 (MTNFCIK) the chain is on the cytoplasmic side. The chain crosses the membrane as a helical; Signal-anchor for type II membrane protein span at residues 8 to 28 (SYLFLYLSFLLFFDIITIFHV). The Extracellular portion of the chain corresponds to 29-441 (SSIRISTVLK…VGVVKSNHNF (413 aa)). The Peptidase A1 domain occupies 109–435 (FIGDIEIGNP…DNDHKLVGVV (327 aa)). Residues D127 and D324 contribute to the active site.

It belongs to the peptidase A1 family.

It localises to the membrane. Functionally, during the development in the mosquito midgut, plays a role in sporozoite egress from oocysts. The protein is Plasmepsin VI of Plasmodium berghei (strain Anka).